Consider the following 240-residue polypeptide: Proline-rich antigen homolog (240 aa).

Pro residues-rich tracts occupy residues 1–31 and 38–78; these read MTEQ…PAAP and APPP…PPGP. The interval 1-78 is disordered; sequence MTEQPPPGGS…GGYAPPPPGP (78 aa). Residues 89–233 enclose the RDD domain; it reads TPWITRVLAA…KRQTLADKIM (145 aa). 3 consecutive transmembrane segments (helical) span residues 98-118, 142-162, and 203-223; these read AFID…IMLV, SMIG…YLVW, and LAHF…LWDA.

The protein belongs to the mycobacterial Pra family.

Its subcellular location is the cell membrane. The sequence is that of Proline-rich antigen homolog from Mycobacterium tuberculosis (strain CDC 1551 / Oshkosh).